Here is a 1122-residue protein sequence, read N- to C-terminus: Telomerase reverse transcriptase (1122 aa).

Positions 1 to 239 (MTRAPRCPAV…TKRHLSLTST (239 aa)) are RNA-interacting domain 1. The interval 58-205 (MHWGSQPPPA…RPVGRNFTNL (148 aa)) is GQ motif. The segment at 137-141 (WMLLL) is required for regulating specificity for telomeric DNA and for processivity for primer elongation. The tract at residues 213–296 (SSSRQEAPKP…KDLSSKGKVS (84 aa)) is disordered. The tract at residues 240–328 (SVPSAKKARC…PRQNAFQLRP (89 aa)) is linker. Residues 284-295 (TAEKDLSSKGKV) are compositionally biased toward basic and acidic residues. Residues 306–528 (CKHKPSSTSL…VPAAEHRLRE (223 aa)) form a required for oligomerization region. Positions 329–540 (FIETRHFLYS…LATFLFWLMD (212 aa)) are RNA-interacting domain 2. The TFLY; involved in RNA binding signature appears at 332–337 (TRHFLY). The segment at 381–511 (LCRTHRLSRR…MKVEDCHWLR (131 aa)) is QFP motif. Positions 402-422 (LVNHAECQYVRLLRSHCRFRT) are CP motif. Ser-447 carries the phosphoserine; by DYRK2 modification. The Reverse transcriptase domain maps to 595–928 (EVRHHQDTWL…CLFPWCGLLL (334 aa)). Tyr-697 bears the Phosphotyrosine; by SRC-type Tyr-kinases mark. Positions 702, 861, and 862 each coordinate Mg(2+). The tract at residues 907 to 921 (LGGAAPYQLPAHCLF) is required for oligomerization. A primer grip sequence region spans residues 923–927 (WCGLL). A CTE region spans residues 929-1122 (DTQTLEVFCD…LSTDFQTILD (194 aa)).

The protein belongs to the reverse transcriptase family. Telomerase subfamily. In terms of assembly, catalytic component of the telomerase holoenzyme complex composed of one molecule of TERT, one molecule of WRAP53/TCAB1, two molecules of H/ACA ribonucleoprotein complex subunits DKC1, NOP10, NHP2 and GAR1, and a telomerase RNA template component (TERC). The telomerase holoenzyme complex is associated with TEP1, SMG6/EST1A and POT1. The molecular chaperone HSP90/P23 complex is required for correct assembly and stabilization of the active telomerase. Interacts directly with HSP90A and PTGES3. Interacts with HSPA1A; the interaction occurs in the absence of TERC and dissociates once the complex has formed. Interacts with RAN; the interaction promotes nuclear export of TERT. Interacts with XPO1. Interacts with PTPN11; the interaction retains TERT in the nucleus. Interacts with NCL (via RRM1 and C-terminal RRM4/Arg/Gly-rich domains); the interaction is important for nucleolar localization of TERT. Interacts with SMARCA4 (via the bromodomain); the interaction regulates Wnt-mediated signaling. Interacts with MCRS1 (isoform MCRS2); the interaction inhibits in vitro telomerase activity. Interacts with PIF1; the interaction has no effect on the elongation activity of TERT. Interacts with PML; the interaction recruits TERT to PML bodies and inhibits telomerase activity. Interacts with GNL3L. Interacts with isoform 1 and isoform 2 of NVL. Interacts with DHX36. Interacts with ATF7. Post-translationally, phosphorylation at Tyr-697 under oxidative stress leads to translocation of TERT to the cytoplasm and reduces its antiapoptotic activity. Dephosphorylated by SHP2/PTPN11 leading to nuclear retention. Phosphorylation by the AKT pathway promotes nuclear location. Phosphorylation at the G2/M phase at Ser-447 by DYRK2 promotes ubiquitination by the EDVP complex and degradation. In terms of processing, ubiquitinated by the EDVP complex, a E3 ligase complex following phosphorylation at Ser-447 by DYRK2. Ubiquitinated leads to proteasomal degradation. High activity in intestine, liver and testis, moderate in lung, very low in muscle, heart and brain.

Its subcellular location is the nucleus. It is found in the nucleolus. The protein resides in the nucleoplasm. The protein localises to the chromosome. It localises to the telomere. Its subcellular location is the cytoplasm. It is found in the PML body. The catalysed reaction is DNA(n) + a 2'-deoxyribonucleoside 5'-triphosphate = DNA(n+1) + diphosphate. Its function is as follows. Telomerase is a ribonucleoprotein enzyme essential for the replication of chromosome termini in most eukaryotes. Active in progenitor and cancer cells. Inactive, or very low activity, in normal somatic cells. Catalytic component of the teleromerase holoenzyme complex whose main activity is the elongation of telomeres by acting as a reverse transcriptase that adds simple sequence repeats to chromosome ends by copying a template sequence within the RNA component of the enzyme. Catalyzes the RNA-dependent extension of 3'-chromosomal termini with the 6-nucleotide telomeric repeat unit, 5'-TTAGGG-3'. The catalytic cycle involves primer binding, primer extension and release of product once the template boundary has been reached or nascent product translocation followed by further extension. More active on substrates containing 2 or 3 telomeric repeats. Telomerase activity is regulated by a number of factors including telomerase complex-associated proteins, chaperones and polypeptide modifiers. Modulates Wnt signaling. Plays important roles in aging and antiapoptosis. The sequence is that of Telomerase reverse transcriptase (Tert) from Mus musculus (Mouse).